We begin with the raw amino-acid sequence, 81 residues long: EC protein III (81 aa).

The protein belongs to the metallothionein superfamily. Type 15 family.

In terms of biological role, binds 5 molecules of zinc. May have a role in Zn(2+) homeostasis during embryogenesis. This is EC protein III from Triticum aestivum (Wheat).